The sequence spans 188 residues: Photosystem I assembly protein Ycf4 (188 aa).

2 helical membrane passes run Y26–S46 and L68–I88.

Belongs to the Ycf4 family.

It localises to the cellular thylakoid membrane. Seems to be required for the assembly of the photosystem I complex. In Synechococcus sp. (strain ATCC 27144 / PCC 6301 / SAUG 1402/1) (Anacystis nidulans), this protein is Photosystem I assembly protein Ycf4.